We begin with the raw amino-acid sequence, 747 residues long: Tegument protein UL46 homolog (747 aa).

Disordered stretches follow at residues 437–484 (FCCP…SPRT), 525–593 (QRSD…DYMR), 611–665 (TPYM…PEVV), and 689–747 (SASR…VSSL). The segment covering 465 to 484 (LRSSRQLPTSPPSNIVSPRT) has biased composition (polar residues). Over residues 528-540 (DSSSSDNSTCSST) the composition is skewed to low complexity. Residues 541-553 (ETQYITLPSTPSP) are compositionally biased toward polar residues. Composition is skewed to basic and acidic residues over residues 707–724 (VCRE…DGFI) and 736–747 (KHPDQTERVSSL).

Belongs to the herpesviridae HHV-1 VP11/12 protein family.

It localises to the virion tegument. Its subcellular location is the host cell membrane. Its function is as follows. Modulates alpha trans-inducing factor-dependent activation of alpha genes. The protein is Tegument protein UL46 homolog of Equine herpesvirus 1 (strain Ab4p) (EHV-1).